The primary structure comprises 409 residues: tRNA(Met) cytidine acetate ligase (409 aa).

ATP is bound by residues 7–20 (VVEY…HLHH), G102, N169, and R194.

This sequence belongs to the TmcAL family.

The protein resides in the cytoplasm. It carries out the reaction cytidine(34) in elongator tRNA(Met) + acetate + ATP = N(4)-acetylcytidine(34) in elongator tRNA(Met) + AMP + diphosphate. Functionally, catalyzes the formation of N(4)-acetylcytidine (ac(4)C) at the wobble position of elongator tRNA(Met), using acetate and ATP as substrates. First activates an acetate ion to form acetyladenylate (Ac-AMP) and then transfers the acetyl group to tRNA to form ac(4)C34. The protein is tRNA(Met) cytidine acetate ligase of Clostridium botulinum (strain Loch Maree / Type A3).